The sequence spans 472 residues: Protein nucleotidyltransferase YdiU (472 aa).

ATP-binding residues include Gly86, Gly88, Arg89, Lys109, Asp121, Gly122, Arg172, and Arg179. Asp244 functions as the Proton acceptor in the catalytic mechanism. Mg(2+)-binding residues include Asn245 and Asp254. Position 254 (Asp254) interacts with ATP.

It belongs to the SELO family. It depends on Mg(2+) as a cofactor. Requires Mn(2+) as cofactor.

It carries out the reaction L-seryl-[protein] + ATP = 3-O-(5'-adenylyl)-L-seryl-[protein] + diphosphate. The enzyme catalyses L-threonyl-[protein] + ATP = 3-O-(5'-adenylyl)-L-threonyl-[protein] + diphosphate. The catalysed reaction is L-tyrosyl-[protein] + ATP = O-(5'-adenylyl)-L-tyrosyl-[protein] + diphosphate. It catalyses the reaction L-histidyl-[protein] + UTP = N(tele)-(5'-uridylyl)-L-histidyl-[protein] + diphosphate. It carries out the reaction L-seryl-[protein] + UTP = O-(5'-uridylyl)-L-seryl-[protein] + diphosphate. The enzyme catalyses L-tyrosyl-[protein] + UTP = O-(5'-uridylyl)-L-tyrosyl-[protein] + diphosphate. Functionally, nucleotidyltransferase involved in the post-translational modification of proteins. It can catalyze the addition of adenosine monophosphate (AMP) or uridine monophosphate (UMP) to a protein, resulting in modifications known as AMPylation and UMPylation. In Ruegeria pomeroyi (strain ATCC 700808 / DSM 15171 / DSS-3) (Silicibacter pomeroyi), this protein is Protein nucleotidyltransferase YdiU.